We begin with the raw amino-acid sequence, 226 residues long: uncharacterized protein (226 aa).

The next 4 membrane-spanning stretches (helical) occupy residues 25-45 (ALAW…IFLI), 54-74 (FLLF…YFIF), 107-127 (ELFL…YFFI), and 153-173 (TITI…CFSS).

It is found in the cell membrane. This is an uncharacterized protein from Mycoplasma genitalium (strain ATCC 33530 / DSM 19775 / NCTC 10195 / G37) (Mycoplasmoides genitalium).